The primary structure comprises 317 residues: Melanocyte-stimulating hormone receptor (317 aa).

Residues 1–37 lie on the Extracellular side of the membrane; the sequence is MPMQGAQRRLLGSLNSTPTATPNLGLAANHTGAPCLE. A glycan (N-linked (GlcNAc...) asparagine) is linked at N29. Residues 38–63 traverse the membrane as a helical segment; the sequence is VSIPDGLFLSLGLVSLVENVLVVAAI. The Cytoplasmic segment spans residues 64-72; the sequence is AKNRNLHSP. The helical transmembrane segment at 73–93 threads the bilayer; sequence MYCFICCLALSDLLVSGSNML. The Extracellular segment spans residues 94 to 118; that stretch reads EMAVILLLEAGALATRASVVQQLQN. Residues 119–140 traverse the membrane as a helical segment; that stretch reads TIDVLTCSSMLCSLCFLGAIAV. Topologically, residues 141–163 are cytoplasmic; sequence DRYVSIFYALRYHSIVTLPRARR. Residues 164-183 form a helical membrane-spanning segment; sequence AIAAIWVASVLSSTLFIAYC. The Extracellular segment spans residues 184–191; the sequence is DHAAVLLC. Residues 192–211 form a helical membrane-spanning segment; it reads LVVFFLAMLVLMAVLYVHML. The Cytoplasmic segment spans residues 212 to 240; that stretch reads ARACQHAQGITRLHKRQLPAHQGFGLRGA. The chain crosses the membrane as a helical span at residues 241–266; it reads ATLTILLGIFFLCWGPFFLHLMLVVL. At 267-279 the chain is on the extracellular side; the sequence is CPQHLTCSCIFKN. The helical transmembrane segment at 280-300 threads the bilayer; the sequence is FKVFLTLIICNTIIDPLIYAF. The Cytoplasmic portion of the chain corresponds to 301-317; that stretch reads RSQELCRTLREVLLCSW. A lipid anchor (S-palmitoyl cysteine) is attached at C315.

The protein belongs to the G-protein coupled receptor 1 family. As to quaternary structure, interacts with MGRN1, but does not undergo MGRN1-mediated ubiquitination; this interaction competes with GNAS-binding and thus inhibits agonist-induced cAMP production. Interacts with OPN3; the interaction results in a decrease in MC1R-mediated cAMP signaling and ultimately a decrease in melanin production in melanocytes.

The protein resides in the cell membrane. Its function is as follows. Receptor for MSH (alpha, beta and gamma) and ACTH. The activity of this receptor is mediated by G proteins which activate adenylate cyclase. Mediates melanogenesis, the production of eumelanin (black/brown) and phaeomelanin (red/yellow), via regulation of cAMP signaling in melanocytes. This is Melanocyte-stimulating hormone receptor (MC1R) from Alouatta pigra (Guatemalan howler monkey).